The sequence spans 237 residues: Ankyrin repeat protein 14 (237 aa).

ANK repeat units follow at residues 27–56 (RGET…DVNI) and 60–90 (NGYT…TLDC).

In terms of biological role, may be involved in virus-host protein interaction through the ankyrin repeats. The protein is Ankyrin repeat protein 14 of Vaccinia virus (strain Western Reserve) (VACV).